We begin with the raw amino-acid sequence, 113 residues long: Nucleoid-associated protein CLH_3225 (113 aa).

Positions 1–14 are enriched in gly residues; that stretch reads MAKGGFPGGFGGGN. Residues 1 to 31 are disordered; it reads MAKGGFPGGFGGGNMNNLMKQAQKLQKQMED.

Belongs to the YbaB/EbfC family. In terms of assembly, homodimer.

It is found in the cytoplasm. It localises to the nucleoid. Its function is as follows. Binds to DNA and alters its conformation. May be involved in regulation of gene expression, nucleoid organization and DNA protection. This chain is Nucleoid-associated protein CLH_3225, found in Clostridium botulinum (strain Alaska E43 / Type E3).